A 403-amino-acid chain; its full sequence is Phosphopentomutase 2 (403 aa).

Residues aspartate 13, aspartate 298, histidine 303, aspartate 339, histidine 340, and histidine 351 each coordinate Mn(2+).

Belongs to the phosphopentomutase family. It depends on Mn(2+) as a cofactor.

It is found in the cytoplasm. The enzyme catalyses 2-deoxy-alpha-D-ribose 1-phosphate = 2-deoxy-D-ribose 5-phosphate. It catalyses the reaction alpha-D-ribose 1-phosphate = D-ribose 5-phosphate. It functions in the pathway carbohydrate degradation; 2-deoxy-D-ribose 1-phosphate degradation; D-glyceraldehyde 3-phosphate and acetaldehyde from 2-deoxy-alpha-D-ribose 1-phosphate: step 1/2. In terms of biological role, isomerase that catalyzes the conversion of deoxy-ribose 1-phosphate (dRib-1-P) and ribose 1-phosphate (Rib-1-P) to deoxy-ribose 5-phosphate (dRib-5-P) and ribose 5-phosphate (Rib-5-P), respectively. This Streptococcus agalactiae serotype Ia (strain ATCC 27591 / A909 / CDC SS700) protein is Phosphopentomutase 2.